A 206-amino-acid polypeptide reads, in one-letter code: Probable chemoreceptor glutamine deamidase CheD (206 aa).

This sequence belongs to the CheD family.

The enzyme catalyses L-glutaminyl-[protein] + H2O = L-glutamyl-[protein] + NH4(+). Probably deamidates glutamine residues to glutamate on methyl-accepting chemotaxis receptors (MCPs), playing an important role in chemotaxis. In Laribacter hongkongensis (strain HLHK9), this protein is Probable chemoreceptor glutamine deamidase CheD.